The sequence spans 530 residues: UDP-glucuronosyltransferase 2B15 (530 aa).

The signal sequence occupies residues 1-23; the sequence is MSLKWTSVFLLIQLSCYFSSGSC. Residue N65 is glycosylated (N-linked (GlcNAc...) asparagine). K136 bears the N6-succinyllysine mark. N-linked (GlcNAc...) asparagine glycosylation is found at N316 and N483. A helical membrane pass occupies residues 495-515; the sequence is IAFLLACVATVIFIITKFCLF.

This sequence belongs to the UDP-glycosyltransferase family. Expressed in many tissues. Present in liver, prostate and testis.

Its subcellular location is the endoplasmic reticulum membrane. It carries out the reaction glucuronate acceptor + UDP-alpha-D-glucuronate = acceptor beta-D-glucuronoside + UDP + H(+). The catalysed reaction is 17alpha-estradiol + UDP-alpha-D-glucuronate = 17alpha-estradiol 3-O-(beta-D-glucuronate) + UDP + H(+). It catalyses the reaction 16alpha,17alpha-estriol + UDP-alpha-D-glucuronate = 16alpha,17alpha-estriol 3-O-(beta-D-glucuronate) + UDP + H(+). The enzyme catalyses 17beta-hydroxy-5alpha-androstan-3-one + UDP-alpha-D-glucuronate = 5alpha-dihydrotestosterone 17-O-(beta-D-glucuronate) + UDP + H(+). Its function is as follows. UDP-glucuronosyltransferase (UGT) that catalyzes phase II biotransformation reactions in which lipophilic substrates are conjugated with glucuronic acid to increase the metabolite's water solubility, thereby facilitating excretion into either the urine or bile. Essential for the elimination and detoxification of drugs, xenobiotics and endogenous compounds. Catalyzes the glucuronidation of endogenous steroid hormones such as androgens (testosterone, androsterone) and estrogens (estradiol, epiestradiol, estriol, catechol estrogens). Displays glucuronidation activity toward several classes of xenobiotic substrates, including phenolic compounds (eugenol, 4-nitrophenol, 4-hydroxybiphenyl) and phenylpropanoids (naringenin, coumarins). Catalyzes the glucuronidation of monoterpenoid alcohols such as borneol, menthol and isomenthol, a class of natural compounds used in essential oils. The protein is UDP-glucuronosyltransferase 2B15 of Homo sapiens (Human).